We begin with the raw amino-acid sequence, 568 residues long: MPASISRSTYASMFGPTTGDRLRLGDTELVIEVERDLTTYGEEVKFGGGKVIRDGMGQSQRTRAEGAMDTVITNALIVDWTGIYKADVGLRDGRIAKIGKAGNPDTQPGVDIVIGPGTEIIAGEGRILTAGGMDAHIHFICPQQIEDSLHSGITTMLGGGTGPAHGTLATTCTPGPWHIGRMLQAADAFPINLAFAGKGNASLPAGLEEQVRAGASCLKLHEDWGTTPAAIDCCLSVADRMDVQVMIHTDTLNESGFVENTLAAIGGRTIHAFHTEGAGGGHAPDIIKVVGAANVIPSSTNPTMPYTANTVEEHLDMLMVCHHLDRSIPEDVAFAESRIRKETIAAEDILHDMGAFSVISSDSQAMGRVGEVITRTWQTAHKMKVQRGRLAEETGANDNQRVRRYIAKYTINPAIAHGLSRHIGSVEEGKRADLVLWQPAFFGAKPDLVLLGGMIVCAQMGDPNGSIPAQPYYSRPMFGAFGGALHASAVTFVSQAAAEDGVGERLRLQKGTLAVEGTRDIGKADMKLNVHRPSIEVNPETYEVRADGELLTCQPLAELPLAQRYFLY.

The 438-residue stretch at 131 to 568 (GGMDAHIHFI…LPLAQRYFLY (438 aa)) folds into the Urease domain. Ni(2+) is bound by residues His-136, His-138, and Lys-219. Lys-219 is modified (N6-carboxylysine). His-221 contributes to the substrate binding site. The Ni(2+) site is built by His-248 and His-274. His-322 functions as the Proton donor in the catalytic mechanism. A Ni(2+)-binding site is contributed by Asp-362.

The protein belongs to the metallo-dependent hydrolases superfamily. Urease alpha subunit family. Heterotrimer of UreA (gamma), UreB (beta) and UreC (alpha) subunits. Three heterotrimers associate to form the active enzyme. The cofactor is Ni cation. Carboxylation allows a single lysine to coordinate two nickel ions.

It is found in the cytoplasm. The catalysed reaction is urea + 2 H2O + H(+) = hydrogencarbonate + 2 NH4(+). It participates in nitrogen metabolism; urea degradation; CO(2) and NH(3) from urea (urease route): step 1/1. The protein is Urease subunit alpha of Cereibacter sphaeroides (strain KD131 / KCTC 12085) (Rhodobacter sphaeroides).